The sequence spans 215 residues: MALLPLLDVINLGRQPYEQSWQAMTAFTNQRTPDTPDQLWLVEHPPVFTQGQAGKAEHLLFPGDIPVVQTDRGGQVTYHGPGQLVAYPLLDLRRLKMGVRDLVTAIEQTIVATLAEYGIESYPKPDAPGVYVENHKIASLGLRVRRGCSFHGLALNVDMDLSPFLRINPCGYQGLAMTQMRDLMPETPSLVQVQEQLVCQFARKLGYETCTMRAN.

The 177-residue stretch at 33-209 folds into the BPL/LPL catalytic domain; it reads PDTPDQLWLV…QFARKLGYET (177 aa). Substrate contacts are provided by residues 72–79, 139–141, and 152–154; these read RGGQVTYH, SLG, and GLA. C170 acts as the Acyl-thioester intermediate in catalysis.

Belongs to the LipB family.

The protein resides in the cytoplasm. The enzyme catalyses octanoyl-[ACP] + L-lysyl-[protein] = N(6)-octanoyl-L-lysyl-[protein] + holo-[ACP] + H(+). Its pathway is protein modification; protein lipoylation via endogenous pathway; protein N(6)-(lipoyl)lysine from octanoyl-[acyl-carrier-protein]: step 1/2. Its function is as follows. Catalyzes the transfer of endogenously produced octanoic acid from octanoyl-acyl-carrier-protein onto the lipoyl domains of lipoate-dependent enzymes. Lipoyl-ACP can also act as a substrate although octanoyl-ACP is likely to be the physiological substrate. This Cellvibrio japonicus (strain Ueda107) (Pseudomonas fluorescens subsp. cellulosa) protein is Octanoyltransferase.